The primary structure comprises 505 residues: Lysine--tRNA ligase (505 aa).

Residues Glu415 and Glu422 each coordinate Mg(2+).

The protein belongs to the class-II aminoacyl-tRNA synthetase family. Homodimer. Mg(2+) serves as cofactor.

It is found in the cytoplasm. The enzyme catalyses tRNA(Lys) + L-lysine + ATP = L-lysyl-tRNA(Lys) + AMP + diphosphate. The polypeptide is Lysine--tRNA ligase (Pectobacterium carotovorum subsp. carotovorum (strain PC1)).